The sequence spans 326 residues: Ornithine carbamoyltransferase (326 aa).

Residues 54–57, Gln-81, Arg-105, and 132–135 contribute to the carbamoyl phosphate site; these read STRT and HPTQ. Residues Asn-164, Asp-225, and 229–230 each bind L-ornithine; that span reads SM. Carbamoyl phosphate is bound by residues 266–267 and Arg-311; that span reads CL.

It belongs to the aspartate/ornithine carbamoyltransferase superfamily. OTCase family.

It is found in the cytoplasm. It carries out the reaction carbamoyl phosphate + L-ornithine = L-citrulline + phosphate + H(+). Its pathway is amino-acid biosynthesis; L-arginine biosynthesis; L-arginine from L-ornithine and carbamoyl phosphate: step 1/3. Its function is as follows. Reversibly catalyzes the transfer of the carbamoyl group from carbamoyl phosphate (CP) to the N(epsilon) atom of ornithine (ORN) to produce L-citrulline. The sequence is that of Ornithine carbamoyltransferase (argF) from Streptococcus mutans serotype c (strain ATCC 700610 / UA159).